A 664-amino-acid polypeptide reads, in one-letter code: Ent-copalyl diphosphate synthase 5 (664 aa).

Lysine 101 serves as a coordination point for substrate. Positions 233 and 235 each coordinate Mg(2+). Positions 233 to 236 (DIDD) match the DXDD motif motif. Substrate is bound at residue lysine 320.

This sequence belongs to the terpene synthase family. Tpsc subfamily. Requires Mg(2+) as cofactor. Ubiquitous expression in roots, stems, leaves and flowers.

The protein localises to the plastid. It localises to the chloroplast. It carries out the reaction (2E,6E,10E)-geranylgeranyl diphosphate = ent-copalyl diphosphate. It functions in the pathway secondary metabolite biosynthesis; terpenoid biosynthesis. In terms of biological role, involved in the biosynthesis of ent-kaurene diterpenoids natural products such as oridonin, miltiradiene, eriocalyxin B and nezukol, known to exhibit antitumor, anti-inflammatory and antibacterial activities. Catalyzes the conversion of (2E,6E,10E)-geranylgeranyl diphosphate (GGPP) to ent-copalyl diphosphate (ent-CPP). The protein is Ent-copalyl diphosphate synthase 5 of Isodon rubescens (Rabdosia rubescens).